The primary structure comprises 109 residues: RNA-binding protein Hfq (109 aa).

The Sm domain maps to 9–68 (DPFLNALRKEKVNVSVYLVNGIKLQGQVEAFDQFCIVLRNTVNQMVYKHAISTIVPAKSV). Residues 77-109 (PYHQNSNDEQDENVDDIHSDDLEIQENEGNIHE) are disordered.

It belongs to the Hfq family. As to quaternary structure, homohexamer.

In terms of biological role, RNA chaperone that binds small regulatory RNA (sRNAs) and mRNAs to facilitate mRNA translational regulation in response to envelope stress, environmental stress and changes in metabolite concentrations. Also binds with high specificity to tRNAs. This is RNA-binding protein Hfq from Francisella tularensis subsp. mediasiatica (strain FSC147).